Reading from the N-terminus, the 946-residue chain is MTNLSGKKSLNTVTLVFKLPYYTQWGQSLLIAGSEPALGSWNVKQGLSLSPVHQGNELIWSGRVSVATGFTCQYNYYVVDDNKNVLRSESGEKRKLVLPEGVQDGDVVEIRDWWQDASEALFLRSAFKNVIFNGSENAKRELKTTSLNKSLEPEDIVVQFIVSCPRLGAGSTVVVTGSNPQLGRWQTQDGLKLNYVGDSIWKANCLLRKSEFPIKYKYCKISEAGVSSLEFGPNREADVDLSSPKPSRYVLLSDGALRESPWRGAGVAVPIFSIRSNEDLGVGEFLDLKLLVDWAVNSGFHLVQLLPINDTSVHGMWWDSYPYSSLSVFALHPLYLRVQALSDAIPGDIKDEISQAKKQLDKKDVDYEASLASKLSIARKIFKLEKDKVLNSSSFKQFLSENEEWLKPYAAFCFLRDFFETSDHSQWGRFSQFSKEKLDKLVSEGTLHHDVICFHYYIQYHLYMQLSEAAAYARKKKVILKGDLPIGVDRNSVDTWVYPTLFRMNTATGAPPDYFDKNGQNWGFPTYNWEEMSKDNYGWWRARLTQMAKYFTAYRIDHILGFFRIWELPDHAATGLVGKFRPSIALSQEELLSEGLWDFDRMSRPYILQETLEEKFGSFWTVIAANFLNEYKKQHYEFKEDCNTEKKIIAKLKNSSEKSLWLEKEDSIRRGLFDLLQNIVLIRDPEDSTKFYPRFNQEDTSSFNDLDEHSKNILRRLYYDYYFARQENLWRQNALKTLPVLLNSSDMLACGEDLGLIPACVHPVMQELGLIGLRIQRMPSEPNLEFGIPSQYSYMTVCAPSCHDCSTLRAWWEEDGGRRSRFYQTVIGSDDEPPSRCTPEVANFIVKQHFDAPSMWAIFPLQDLLALKDKYTTRPAKEETINDPTNPKHYWRFRLHVTLDSLLDDKDIQATIKELVTSSGRSFPGKVDGAEESGEKLAKVQLNGKP.

CBM20 domains follow at residues 7 to 115 and 150 to 264; these read KKSL…DWWQ and SLEP…PWRG. Residues 919–946 form a disordered region; it reads SGRSFPGKVDGAEESGEKLAKVQLNGKP.

Belongs to the disproportionating enzyme family.

The protein resides in the cytoplasm. Its subcellular location is the cytosol. It carries out the reaction Transfers a segment of a (1-&gt;4)-alpha-D-glucan to a new position in an acceptor, which may be glucose or a (1-&gt;4)-alpha-D-glucan.. In terms of biological role, cytosolic alpha-glucanotransferase essential for the cytosolic metabolism of maltose, an intermediate on the pathway by which starch is converted to sucrose in leaves at night. The sequence is that of 4-alpha-glucanotransferase DPE2 (DPE2) from Oryza sativa subsp. japonica (Rice).